A 247-amino-acid polypeptide reads, in one-letter code: Carboxy-S-adenosyl-L-methionine synthase (247 aa).

Residues Y39, 64–66, 89–90, 117–118, N132, and R199 contribute to the S-adenosyl-L-methionine site; these read GCS, DN, and DI.

This sequence belongs to the class I-like SAM-binding methyltransferase superfamily. Cx-SAM synthase family. Homodimer.

It carries out the reaction prephenate + S-adenosyl-L-methionine = carboxy-S-adenosyl-L-methionine + 3-phenylpyruvate + H2O. In terms of biological role, catalyzes the conversion of S-adenosyl-L-methionine (SAM) to carboxy-S-adenosyl-L-methionine (Cx-SAM). In Salmonella agona (strain SL483), this protein is Carboxy-S-adenosyl-L-methionine synthase.